The chain runs to 478 residues: GDP-fucose protein O-fucosyltransferase 3 (478 aa).

Over 1-9 (MVRIQRGKL) the chain is Cytoplasmic. Residues 10–30 (LAFCLCVMATVFLLITLQVVV) form a helical; Signal-anchor for type II membrane protein membrane-spanning segment. Residues 31-478 (ELGKFEGKKF…QEFWALVFKD (448 aa)) lie on the Lumenal side of the membrane. 2 N-linked (GlcNAc...) asparagine glycosylation sites follow: asparagine 110 and asparagine 168. A disulfide bond links cysteine 389 and cysteine 392.

It belongs to the glycosyltransferase 10 family.

It is found in the endoplasmic reticulum membrane. It carries out the reaction L-threonyl-[protein] + GDP-beta-L-fucose = 3-O-(alpha-L-fucosyl)-L-threonyl-[protein] + GDP + H(+). It catalyses the reaction L-seryl-[protein] + GDP-beta-L-fucose = 3-O-(alpha-L-fucosyl)-L-seryl-[protein] + GDP + H(+). Its pathway is protein modification; protein glycosylation. In terms of biological role, protein O-fucosyltransferase that specifically catalyzes O-fucosylation of serine or threonine residues in EMI domains of target proteins, such as MMRN1, MMRN2 and EMID1. Attaches fucose through an O-glycosidic linkage. O-fucosylation of EMI domain-containing proteins may be required for facilitating protein folding and secretion. May also show alpha-(1,3)-fucosyltransferase activity toward the innermost N-acetyl glucosamine (GlcNAc) residue in biantennary N-glycan acceptors. However, this was tested with a library of synthetic substrates and this activity is unsure in vivo. May be involved in biosynthesis of Lewis X-carrying biantennary N-glycans that regulate neuron stem cell self-renewal during brain development. The chain is GDP-fucose protein O-fucosyltransferase 3 (FUT10) from Bos taurus (Bovine).